We begin with the raw amino-acid sequence, 307 residues long: tRNA dimethylallyltransferase (307 aa).

ATP is bound at residue 10–17 (GPTASGKS). 12–17 (TASGKS) is a substrate binding site. 2 interaction with substrate tRNA regions span residues 35–38 (DSMQ) and 159–163 (QRLCR).

This sequence belongs to the IPP transferase family. As to quaternary structure, monomer. Requires Mg(2+) as cofactor.

It carries out the reaction adenosine(37) in tRNA + dimethylallyl diphosphate = N(6)-dimethylallyladenosine(37) in tRNA + diphosphate. Catalyzes the transfer of a dimethylallyl group onto the adenine at position 37 in tRNAs that read codons beginning with uridine, leading to the formation of N6-(dimethylallyl)adenosine (i(6)A). This is tRNA dimethylallyltransferase from Phenylobacterium zucineum (strain HLK1).